A 149-amino-acid chain; its full sequence is Heavy metal-associated isoprenylated plant protein 21 (149 aa).

The HMA domain occupies leucine 25–glutamate 88. 2 residues coordinate a metal cation: cysteine 36 and cysteine 39. Cysteine 146 is modified (cysteine methyl ester). Cysteine 146 carries the S-farnesyl cysteine lipid modification. Residues serine 147–methionine 149 constitute a propeptide, removed in mature form.

It belongs to the HIPP family. As to quaternary structure, interacts with ZHD11/HB29. Expressed at low levels in leaves and sepals.

The protein localises to the membrane. Functionally, heavy-metal-binding protein. Binds cadmium. May be involved in cadmium transport and play a role in cadmium detoxification. The polypeptide is Heavy metal-associated isoprenylated plant protein 21 (Arabidopsis thaliana (Mouse-ear cress)).